The sequence spans 117 residues: DNA-directed RNA polymerase II subunit RPB11 (117 aa).

Met1 carries the post-translational modification N-acetylmethionine.

The protein belongs to the archaeal Rpo11/eukaryotic RPB11/RPC19 RNA polymerase subunit family. As to quaternary structure, component of the RNA polymerase II (Pol II) core complex consisting of 12 subunits: a ten-subunit catalytic core composed of POLR2A/RPB1, POLR2B/RPB2, POLR2C/RPB3, POLR2I/RPB9, POLR2J/RPB11, POLR2E/RPABC1, POLR2F/RPABC2, POLR2H/RPABC3, POLR2K/RPABC4 and POLR2L/RPABC5 and a mobile stalk composed of two subunits POLR2D/RPB4 and POLR2G/RPB7, protruding from the core and functioning primarily in transcription initiation. Part of Pol II(G) complex, in which Pol II core associates with an additional subunit POLR2M; unlike conventional Pol II, Pol II(G) functions as a transcriptional repressor. Part of TBP-based Pol II pre-initiation complex (PIC), in which Pol II core assembles with general transcription factors and other specific initiation factors including GTF2E1, GTF2E2, GTF2F1, GTF2F2, TCEA1, ERCC2, ERCC3, GTF2H2, GTF2H3, GTF2H4, GTF2H5, GTF2A1, GTF2A2, GTF2B and TBP; this large multi-subunit PIC complex mediates DNA unwinding and targets Pol II core to the transcription start site where the first phosphodiester bond forms. Interacts with PTPN6; this interaction promotes the recruitment of RNA pol II to the PCK1 promoter.

It is found in the nucleus. In terms of biological role, DNA-dependent RNA polymerase catalyzes the transcription of DNA into RNA using the four ribonucleoside triphosphates as substrates. Component of RNA polymerase II which synthesizes mRNA precursors and many functional non-coding RNAs. Pol II is the central component of the basal RNA polymerase II transcription machinery. It is composed of mobile elements that move relative to each other. POLR2J/RPB11 is part of the core element with the central large cleft. In Bos taurus (Bovine), this protein is DNA-directed RNA polymerase II subunit RPB11 (POLR2J).